The sequence spans 60 residues: uncharacterized protein (60 aa).

Positions V27–K50 are disordered. A compositionally biased stretch (low complexity) spans N29–N49.

This is an uncharacterized protein from Dictyostelium discoideum (Social amoeba).